The following is a 53-amino-acid chain: Large ribosomal subunit protein eL40 (53 aa).

It belongs to the eukaryotic ribosomal protein eL40 family.

The protein is Large ribosomal subunit protein eL40 of Pyrobaculum arsenaticum (strain DSM 13514 / JCM 11321 / PZ6).